The sequence spans 350 residues: Phenylalanine--tRNA ligase alpha subunit (350 aa).

Glu-257 is a Mg(2+) binding site.

The protein belongs to the class-II aminoacyl-tRNA synthetase family. Phe-tRNA synthetase alpha subunit type 1 subfamily. As to quaternary structure, tetramer of two alpha and two beta subunits. The cofactor is Mg(2+).

It is found in the cytoplasm. The enzyme catalyses tRNA(Phe) + L-phenylalanine + ATP = L-phenylalanyl-tRNA(Phe) + AMP + diphosphate + H(+). This Listeria monocytogenes serotype 4a (strain HCC23) protein is Phenylalanine--tRNA ligase alpha subunit.